A 465-amino-acid chain; its full sequence is Zinc finger CCCH domain-containing protein 58 (465 aa).

A disordered region spans residues 1-26; sequence MERYGGAGEDESRSDPSHEWSAQGTE. 3 consecutive C3H1-type zinc fingers follow at residues 51–79, 97–125, and 145–173; these read RPDE…HPRN, RMGQ…HPRQ, and RPGE…HPVP. Disordered regions lie at residues 173–200 and 274–302; these read PPGV…LQSQ and LSPS…QRPE. The span at 177 to 191 shows a compositional bias: low complexity; the sequence is QAPSQQQQQQLSAGP. Residues 283–298 show a composition bias toward polar residues; it reads SGPSSTGVSNKEQTFP. 2 consecutive C3H1-type zinc fingers follow at residues 300 to 328 and 345 to 373; these read RPEQ…HPME and RPGA…HSLG. A compositionally biased stretch (low complexity) spans 397 to 431; that stretch reads SLGTLAPSSSSDQCTELISSSSIEPITTTTGGSET. Positions 397–465 are disordered; that stretch reads SLGTLAPSSS…SASNEAKTSS (69 aa). Residues 444-453 are compositionally biased toward basic and acidic residues; sequence SHPEPAETNK. Positions 454–465 are enriched in polar residues; the sequence is GDSASNEAKTSS.

The protein resides in the nucleus. This Arabidopsis thaliana (Mouse-ear cress) protein is Zinc finger CCCH domain-containing protein 58.